The sequence spans 372 residues: Cuticle collagen dpy-10 (372 aa).

Residues 1-45 (MKNNAKEDYRTFSLTTNYSRQMIYRCVTGLQIGFSLFSFIIVCVA) form the signal peptide. Triple-helical region stretches follow at residues 144–173 (GPPG…PGTT), 195–251 (GPPG…KGPT), and 259–324 (GPPG…PGVC). Positions 144–372 (GPPGPRGSSG…RAGYQGYGRK (229 aa)) are disordered. The span at 185–196 (EPPPCRPCPKGP) shows a compositional bias: pro residues. Residues 197–208 (PGIKGWPGFPGD) are compositionally biased toward low complexity. 2 stretches are compositionally biased toward gly residues: residues 237 to 246 (GYRGGPGAPG) and 283 to 292 (GLTGGQGERG). Low complexity predominate over residues 293–303 (WPGVSGESGEP). The segment covering 353 to 363 (GYGGSRGGGDR) has biased composition (gly residues).

This sequence belongs to the cuticular collagen family. As to quaternary structure, collagen polypeptide chains are complexed within the cuticle by disulfide bonds and other types of covalent cross-links.

Functionally, nematode cuticles are composed largely of collagen-like proteins. The cuticle functions both as an exoskeleton and as a barrier to protect the worm from its environment. The sequence is that of Cuticle collagen dpy-10 (dpy-10) from Caenorhabditis elegans.